Consider the following 558-residue polypeptide: Putative ABC transporter ATP-binding protein SMU_1934c (558 aa).

ABC transporter domains follow at residues 5–246 (IEFK…GIRE) and 295–527 (FDIQ…ANLK). ATP contacts are provided by residues 39–46 (GPSGSGKS) and 328–335 (GKNGAGKS).

The protein belongs to the ABC transporter superfamily.

It localises to the cell membrane. Probably part of an ABC transporter complex. Responsible for energy coupling to the transport system. This Streptococcus mutans serotype c (strain ATCC 700610 / UA159) protein is Putative ABC transporter ATP-binding protein SMU_1934c (sdcBA).